Consider the following 336-residue polypeptide: MEKLFIPKGYKPLLSLRETEVAIKELKDFFEDSLAKNLNLTRVSAPLFVNKGSGLNDDLNGIERPVSFDMKAMPEFNIQIVHSLAKWKRLALHRYEFEHGEGLYTDMNAIRRDEDLDNIHSIYVDQWDWEKIIDKEERNLETLKETVRSIYGTFKATEDFIVAKYPHIEKILPEDITFITSQELEDRYPDLTSKERETAICKEFGAVFIIGIGGKLASGEKHDDRSPDYDDWTLNGDLLFYYPLFDEAVELSSMGIRVDEESLLKQLKIAECEERKELPFHQMLLEGKLPYTIGGGIGQSRICMFFLRKAHIGEVQASMWDEDMIRTCEENNIHLL.

The protein belongs to the class-II aminoacyl-tRNA synthetase family. AsnA subfamily.

It is found in the cytoplasm. It carries out the reaction L-aspartate + NH4(+) + ATP = L-asparagine + AMP + diphosphate + H(+). It participates in amino-acid biosynthesis; L-asparagine biosynthesis; L-asparagine from L-aspartate (ammonia route): step 1/1. This is Aspartate--ammonia ligase from Clostridium perfringens (strain ATCC 13124 / DSM 756 / JCM 1290 / NCIMB 6125 / NCTC 8237 / Type A).